Reading from the N-terminus, the 57-residue chain is MTTYYYVLLSVTTWVGLRHEAKRELVYRGRRSIGRMPREWACRRSRRFAANGVDAAR.

Forms a complex with cognate toxin MazF1.

Its function is as follows. Antitoxin component of a type II toxin-antitoxin (TA) system. This Mycobacterium tuberculosis (strain ATCC 25618 / H37Rv) protein is Probable antitoxin MazE1 (mazE1).